Reading from the N-terminus, the 416-residue chain is Choline/ethanolaminephosphotransferase 1 (416 aa).

Positions 1–20 (MSGHRSTRKRCGDSHPESPV) are disordered. Serine 18 is subject to Phosphoserine. Threonine 40 bears the Phosphothreonine mark. Asparagine 86 provides a ligand contact to CDP-choline. Helical transmembrane passes span 89–108 (TIIG…FYCP) and 116–133 (LWAY…QSLD). A Mg(2+)-binding site is contributed by aspartate 133. Asparagine 144 carries an N-linked (GlcNAc...) asparagine glycan. Residue glutamate 151 coordinates CDP-choline. Mg(2+) is bound at residue aspartate 154. Residue histidine 155 is the Proton acceptor of the active site. 8 helical membrane-spanning segments follow: residues 156 to 176 (GCDS…VQLG), 180 to 199 (DWMF…AHWQ), 210 to 230 (IIDV…AVIG), 246 to 267 (MKLL…NYFR), 286 to 306 (VLSP…IYKK), 315 to 334 (HPCL…TNKL), 349 to 363 (TAFI…DQYF), and 368 to 388 (DEYI…IRYC). Aspartate 158 lines the Mg(2+) pocket.

Belongs to the CDP-alcohol phosphatidyltransferase class-I family. In terms of assembly, homodimer. The cofactor is Mg(2+). Mn(2+) is required as a cofactor.

It localises to the endoplasmic reticulum membrane. The protein resides in the nucleus membrane. It catalyses the reaction CDP-ethanolamine + a 1,2-diacyl-sn-glycerol = a 1,2-diacyl-sn-glycero-3-phosphoethanolamine + CMP + H(+). The catalysed reaction is CDP-choline + a 1,2-diacyl-sn-glycerol = a 1,2-diacyl-sn-glycero-3-phosphocholine + CMP + H(+). The enzyme catalyses 1-O-alkyl-2-acyl-sn-glycerol + CDP-choline = a 1-O-alkyl-2-acyl-sn-glycero-3-phosphocholine + CMP + H(+). It carries out the reaction a 1-O-(1Z-alkenyl)-2-acyl-sn-glycerol + CDP-choline = a 1-O-(1Z-alkenyl)-2-acyl-sn-glycero-3-phosphocholine + CMP + H(+). It catalyses the reaction 1,2-dioctanoyl-sn-glycerol + CDP-choline = 1,2-dioctanoyl-sn-glycero-3-phosphocholine + CMP + H(+). The catalysed reaction is 1,2-didecanoyl-sn-glycerol + CDP-choline = 1,2-didecanoyl-sn-glycero-3-phosphocholine + CMP + H(+). The enzyme catalyses CDP-choline + 1,2-di-(9Z-octadecenoyl)-sn-glycerol = 1,2-di-(9Z-octadecenoyl)-sn-glycero-3-phosphocholine + CMP + H(+). It carries out the reaction 1-hexadecanoyl-2-(9Z-octadecenoyl)-sn-glycerol + CDP-choline = 1-hexadecanoyl-2-(9Z-octadecenoyl)-sn-glycero-3-phosphocholine + CMP + H(+). It catalyses the reaction CDP-ethanolamine + 1,2-di-(9Z-octadecenoyl)-sn-glycerol = 1,2-di-(9Z-octadecenoyl)-sn-glycero-3-phosphoethanolamine + CMP + H(+). The catalysed reaction is 1-hexadecanoyl-2-(9Z-octadecenoyl)-sn-glycerol + CDP-ethanolamine = 1-hexadecanoyl-2-(9Z-octadecenoyl)-sn-glycero-3-phosphoethanolamine + CMP + H(+). The enzyme catalyses 1-hexadecanoyl-2-(4Z,7Z,10Z,13Z,16Z,19Z-docosahexaenoyl)-sn-glycerol + CDP-choline = 1-hexadecanoyl-2-(4Z,7Z,10Z,13Z,16Z,19Z-docosahexaenoyl)-sn-glycero-3-phosphocholine + CMP + H(+). It carries out the reaction 1,2-di-(9Z-hexadecenoyl)-sn-glycerol + CDP-choline = 1,2-di-(9Z-hexadecenoyl)-sn-glycero-3-phosphocholine + CMP + H(+). It catalyses the reaction 1,2-di-(9Z-hexadecenoyl)-sn-glycerol + CDP-ethanolamine = 1,2-di-(9Z-hexadecenoyl)-sn-glycero-3-phosphoethanolamine + CMP + H(+). The catalysed reaction is 1-O-hexadecyl-2-acetyl-sn-glycerol + CDP-choline = 1-O-hexadecyl-2-acetyl-sn-glycero-3-phosphocholine + CMP + H(+). The enzyme catalyses 1-O-hexadecyl-2-(5Z,8Z,11Z,14Z-eicosatetraenoyl)-sn-glycerol + CDP-choline = 1-O-hexadecyl-2-(5Z,8Z,11Z,14Z)-eicosatetraenoyl-sn-glycero-3-phosphocholine + CMP + H(+). Its pathway is phospholipid metabolism; phosphatidylethanolamine biosynthesis; phosphatidylethanolamine from ethanolamine: step 3/3. It functions in the pathway phospholipid metabolism; phosphatidylcholine biosynthesis; phosphatidylcholine from phosphocholine: step 2/2. In terms of biological role, catalyzes both phosphatidylcholine and phosphatidylethanolamine biosynthesis from CDP-choline and CDP-ethanolamine, respectively. Involved in protein-dependent process of phospholipid transport to distribute phosphatidyl choline to the lumenal surface. Has a higher cholinephosphotransferase activity than ethanolaminephosphotransferase activity. This chain is Choline/ethanolaminephosphotransferase 1, found in Mus musculus (Mouse).